The primary structure comprises 681 residues: Potassium-transporting ATPase ATP-binding subunit (681 aa).

Helical transmembrane passes span 30-50 (LLVYVGAILATSLYFLGFFGI), 59-79 (LAIALILWFTVLFANFAEAIA), 216-236 (ILLVTLSIIFLTVSATLLPFT), and 255-275 (IALLVCLAPTTIGALLSSIGI). The 4-aspartylphosphate intermediate role is filled by Asp-306. ATP-binding positions include Asp-343, Glu-347, 376–383 (FTATTRMS), and Lys-394. Positions 517 and 521 each coordinate Mg(2+). 3 consecutive transmembrane segments (helical) span residues 587–607 (FAIIPVLFYGIFPQLEALNLM), 615–635 (AILSAIIYNAVIIIILIPLSL), and 661–681 (LIAPFIAIKLIDMLLTVLGIV).

The protein belongs to the cation transport ATPase (P-type) (TC 3.A.3) family. Type IA subfamily. The system is composed of three essential subunits: KdpA, KdpB and KdpC.

The protein localises to the cell membrane. It catalyses the reaction K(+)(out) + ATP + H2O = K(+)(in) + ADP + phosphate + H(+). Its function is as follows. Part of the high-affinity ATP-driven potassium transport (or Kdp) system, which catalyzes the hydrolysis of ATP coupled with the electrogenic transport of potassium into the cytoplasm. This subunit is responsible for energy coupling to the transport system and for the release of the potassium ions to the cytoplasm. This Listeria monocytogenes serotype 4a (strain HCC23) protein is Potassium-transporting ATPase ATP-binding subunit.